The sequence spans 216 residues: Protein Syd (216 aa).

It belongs to the Syd family.

Its subcellular location is the cell inner membrane. Its function is as follows. Interacts with the SecY protein in vivo. May bind preferentially to an uncomplexed state of SecY, thus functioning either as a chelating agent for excess SecY in the cell or as a regulatory factor that negatively controls the translocase function. The sequence is that of Protein Syd from Shewanella baltica (strain OS185).